The sequence spans 347 residues: Anthranilate phosphoribosyltransferase (347 aa).

5-phospho-alpha-D-ribose 1-diphosphate contacts are provided by residues Gly-88, 91-92, Thr-96, 98-101, 116-124, and Ser-128; these read GD, NIST, and KHGNRSVSS. Gly-88 contacts anthranilate. Ser-100 contributes to the Mg(2+) binding site. Asn-119 lines the anthranilate pocket. Residue Arg-174 participates in anthranilate binding. Asp-232 and Glu-233 together coordinate Mg(2+).

Belongs to the anthranilate phosphoribosyltransferase family. As to quaternary structure, homodimer. The cofactor is Mg(2+).

The enzyme catalyses N-(5-phospho-beta-D-ribosyl)anthranilate + diphosphate = 5-phospho-alpha-D-ribose 1-diphosphate + anthranilate. It functions in the pathway amino-acid biosynthesis; L-tryptophan biosynthesis; L-tryptophan from chorismate: step 2/5. Its function is as follows. Catalyzes the transfer of the phosphoribosyl group of 5-phosphorylribose-1-pyrophosphate (PRPP) to anthranilate to yield N-(5'-phosphoribosyl)-anthranilate (PRA). The chain is Anthranilate phosphoribosyltransferase from Shewanella sp. (strain ANA-3).